The primary structure comprises 359 residues: UDP-N-acetylglucosamine--N-acetylmuramyl-(pentapeptide) pyrophosphoryl-undecaprenol N-acetylglucosamine transferase (359 aa).

UDP-N-acetyl-alpha-D-glucosamine contacts are provided by residues 15–17 (TGG), Asn-127, Arg-166, Ser-191, Ile-245, 264–269 (ALTVSE), and Gln-290.

Belongs to the glycosyltransferase 28 family. MurG subfamily.

Its subcellular location is the cell inner membrane. It catalyses the reaction di-trans,octa-cis-undecaprenyl diphospho-N-acetyl-alpha-D-muramoyl-L-alanyl-D-glutamyl-meso-2,6-diaminopimeloyl-D-alanyl-D-alanine + UDP-N-acetyl-alpha-D-glucosamine = di-trans,octa-cis-undecaprenyl diphospho-[N-acetyl-alpha-D-glucosaminyl-(1-&gt;4)]-N-acetyl-alpha-D-muramoyl-L-alanyl-D-glutamyl-meso-2,6-diaminopimeloyl-D-alanyl-D-alanine + UDP + H(+). It functions in the pathway cell wall biogenesis; peptidoglycan biosynthesis. In terms of biological role, cell wall formation. Catalyzes the transfer of a GlcNAc subunit on undecaprenyl-pyrophosphoryl-MurNAc-pentapeptide (lipid intermediate I) to form undecaprenyl-pyrophosphoryl-MurNAc-(pentapeptide)GlcNAc (lipid intermediate II). This Pseudomonas entomophila (strain L48) protein is UDP-N-acetylglucosamine--N-acetylmuramyl-(pentapeptide) pyrophosphoryl-undecaprenol N-acetylglucosamine transferase.